The primary structure comprises 429 residues: Glutamate-1-semialdehyde 2,1-aminomutase (429 aa).

Residue Lys267 is modified to N6-(pyridoxal phosphate)lysine.

This sequence belongs to the class-III pyridoxal-phosphate-dependent aminotransferase family. HemL subfamily. In terms of assembly, homodimer. Requires pyridoxal 5'-phosphate as cofactor.

The protein resides in the cytoplasm. The enzyme catalyses (S)-4-amino-5-oxopentanoate = 5-aminolevulinate. Its pathway is porphyrin-containing compound metabolism; protoporphyrin-IX biosynthesis; 5-aminolevulinate from L-glutamyl-tRNA(Glu): step 2/2. The sequence is that of Glutamate-1-semialdehyde 2,1-aminomutase from Xanthomonas oryzae pv. oryzae (strain MAFF 311018).